The chain runs to 451 residues: Magnesium transporter MgtE (451 aa).

At 1–285 (MVQNMTYDEL…TKAYVAAYRR (285 aa)) the chain is on the cytoplasmic side. Mg(2+) is bound by residues D64 and D96. 2 CBS domains span residues 140 to 203 (MTNR…VQDL) and 204 to 260 (MFTR…EADE). Positions 218, 228, 249, 252, 257, 260, and 261 each coordinate Mg(2+). A helical membrane pass occupies residues 286–306 (LPWLILLLFIGLISGSIISYF). The Extracellular portion of the chain corresponds to 307–311 (EDALK). The chain crosses the membrane as a helical span at residues 312–332 (QVVALAFFMPMVSGMTGNTGT). At 333–371 (QSLAVVIRGLSKEEMNKKTIVRLIFREFRTSIFIGAVCS) the chain is on the cytoplasmic side. 2 helical membrane passes run 372–392 (VLIA…FVVA) and 393–413 (SSLF…PIIL). The Cytoplasmic portion of the chain corresponds to 414 to 427 (HKLKVDPAIASGPL). Mg(2+) contacts are provided by D419 and D433. The helical transmembrane segment at 428 to 448 (ITTLNDILSLLIYFGIATAFI) threads the bilayer. Topologically, residues 449 to 451 (HSL) are extracellular.

The protein belongs to the SLC41A transporter family. Homodimer.

The protein resides in the cell membrane. It carries out the reaction Mg(2+)(in) = Mg(2+)(out). Binds cyclic di-AMP (c-di-AMP), which may regulate the transporter activity. Acts as a magnesium transporter. MgtE is the dominant transporter under rich-medium growth conditions, and it may provide the primary route of magnesium import in B.subtilis, while the other putative transport proteins are likely to be utilized for more-specialized growth conditions. The protein is Magnesium transporter MgtE of Bacillus subtilis (strain 168).